Reading from the N-terminus, the 411-residue chain is Prostaglandin E2 receptor EP3 subtype (411 aa).

Residues 1 to 49 are Extracellular-facing; the sequence is MKETRGDGGSAPFCTRLNHSYPGMWAPEARGNLTRPPGPGEDCGSVSVA. Residues Asn-18 and Asn-32 are each glycosylated (N-linked (GlcNAc...) asparagine). Residues 50–74 traverse the membrane as a helical segment; it reads FPITMLITGFVGNALAMLLVSRSYR. Residues 75-87 are Cytoplasmic-facing; that stretch reads RRESKRKKSFLLC. The helical transmembrane segment at 88–108 threads the bilayer; sequence IGWLALTDLVGQLLTSPVVIL. Residues 109–127 are Extracellular-facing; the sequence is VYLSKQRWEQLDPSGRLCT. A disulfide bond links Cys-126 and Cys-204. A helical transmembrane segment spans residues 128-149; the sequence is FFGLTMTVFGLSSLFIASAMAV. The Cytoplasmic segment spans residues 150–171; that stretch reads ERALAIRAPHWYASHMKTRATR. A helical transmembrane segment spans residues 172 to 193; it reads AVLLGVWLAVLAFALLPVLGVG. Residues 194–223 lie on the Extracellular side of the membrane; sequence QYTIQWPGTWCFISTGRGDNGTSSSHNWGN. The N-linked (GlcNAc...) asparagine glycan is linked to Asn-213. A helical transmembrane segment spans residues 224-249; that stretch reads LFFASTFAFLGLLALAITFTCNLATI. Over 250 to 279 the chain is Cytoplasmic; sequence KALVSRCRAKAAASQSSAQWGRITTETAIQ. Residues 280–303 traverse the membrane as a helical segment; it reads LMGIMCVLSVCWSPLLIMMLKMIF. The Extracellular portion of the chain corresponds to 304–323; the sequence is NQTSVEHCKTDTGKQKECNF. The helical transmembrane segment at 324–345 threads the bilayer; that stretch reads FLIAVRLASLNQILDPWVYLLL. Topologically, residues 346-411 are cytoplasmic; the sequence is RKILLRKFCQ…ADPGARPYQQ (66 aa). Basic and acidic residues predominate over residues 367 to 390; the sequence is IQRENRNVSHSGQHEEARDSEKSK. Positions 367-392 are disordered; the sequence is IQRENRNVSHSGQHEEARDSEKSKTI.

The protein belongs to the G-protein coupled receptor 1 family. Interacts (via C-terminus) with MKLN1. In the kidney cortex and medulla, adrenal gland and stomach. In kidney, expression is higher in tubules in the outer medulla, with lower levels in cortex. In kidney cortex, expression is restricted to distal tubules.

The protein localises to the cell membrane. Receptor for prostaglandin E2 (PGE2). Required for normal development of fever in response to pyrinogens, including IL1B, prostaglandin E2 and bacterial lipopolysaccharide (LPS). Required for normal potentiation of platelet aggregation by prostaglandin E2, and thus plays a role in the regulation of blood coagulation. Required for increased HCO3(-) secretion in the duodenum in response to mucosal acidification, and thereby contributes to the protection of the mucosa against acid-induced ulceration. Not required for normal kidney function, normal urine volume and osmolality. In Oryctolagus cuniculus (Rabbit), this protein is Prostaglandin E2 receptor EP3 subtype (PTGER3).